The sequence spans 382 residues: MSAYSRPVLLLLCGLLLFTISIAVLNTLVPLWLSHQQLPTWQVGMVSSSYFTGNLVGTLIAGRFIQQLGFNRSYHCSCILFALATCGLMLTVDFWSWLGWRFLAGIACALIWVIVESALLRSGTLTNRGQLLAAYMMVYYLGTVIGQLLLGIVSTQLLSVIPWVGALVITAMLPLLFAQFSHQSRHESPPIAVWPMLKRRSARLGINGCIISGVLLGSLYGLLPLYLSHKGMSDASVGGRMALLVSSGIIGQWPMGRMADRYGRLLVLRIQVFVVILGSVAILGNYAMAPALFILGCAGFTLYPVAMAWACEKASADELVAMNQALLMSYTLGSLAGPTMTSLLMQRYSDNLLFIMIAGVAFVYLMMLLRKPDHQQTPYAAV.

10 helical membrane passes run 8 to 28, 41 to 61, 73 to 93, 94 to 114, 133 to 153, 157 to 177, 208 to 228, 274 to 294, 325 to 345, and 349 to 369; these read VLLL…LNTL, WQVG…TLIA, SYHC…LTVD, FWSW…IWVI, AAYM…LGIV, LLSV…PLLF, GCII…LYLS, VVIL…ALFI, ALLM…SLLM, and SDNL…MMLL.

This sequence belongs to the major facilitator superfamily. YcaD (TC 2.A.1.26) family.

It is found in the cell inner membrane. This is an uncharacterized protein from Yersinia pseudotuberculosis serotype O:3 (strain YPIII).